A 299-amino-acid chain; its full sequence is Kynurenine formamidase-like hydrolase fscH (299 aa).

An HGGXW motif is present at residues H48 to W52. The interval S90–A110 is disordered. Catalysis depends on S142, which acts as the Nucleophile.

It belongs to the kynurenine formamidase family.

It participates in secondary metabolite biosynthesis. Functionally, kynurenine formamidase-like hydrolase; part of the fragmented gene cluster that mediates the biosynthesis of fusarochromene, a tryptophan-derived metabolite closely related to a group of mycotoxins including fusarochromanone. Within the pathway, fscH converts the product of fscD into 4-hydroxykyrunenine. The first step of the pathway is the epimerization of L-tryptophan to D-tryptophan in the presence of the NRPS-like tryptophan epimerase fscC. D-tryptophan is subsequently hydroxylated by the tryptophan 6-hydroxylase fscE to yield 6-hydroxytryptophan. The pyrrole ring undergoes cleavaged by the tryptophan 2,3-dioxygenase fscD and is finally converted to 4-hydroxykyrunenine by the hydrolase fscH. The NRPS-like oxidoreductase fscA reduces the carboxyl group to primary alcohol and the DMATS-type prenyltransferase fscG performs prenylation, followed by the formation of a chromene ring catalyzed by the oxidoreductase fscI, which leads to desacetylfusarochromene. Epoxidation by fscF and rearrangement reactions of chromene double bonds convert compound desacetylfusarochromene to fusarochromanones. Although specific acetyltransferases were not found near the fsc gene cluster, several predicted enzymes containing the N-acetyltransferase superfamily domain are present in the genome of F.equiseti. These predicted enzymes may have the potential to convert desacetylfusarochromene to fusarochromene. In Fusarium equiseti (Fusarium scirpi), this protein is Kynurenine formamidase-like hydrolase fscH.